The sequence spans 256 residues: MGLQLSGLDASDSDQRELIWAKRPWAAFRGSWVNRLGRVESVWDLKGVWADQAHSAVSESQAATSSTTTTATGDTLPEHPNALAYQISSTDKDSYKASTQGSGQTNSQNTSPYLHLIKPKKVTASDKLDDDLKNLLDPNEVRVKLRQSFGTDHSTQPQPQPLKTTTPVFGTNSGNLGSVLSGGGTTQDSSTTNQLSPVQRVSGWLVGQLPSTSDGNTSSTNNLAPNTNTGNEVVGVGDLSKRASIESSRLWIALKP.

The segment covering 56-72 has biased composition (low complexity); the sequence is AVSESQAATSSTTTTAT. Disordered stretches follow at residues 56-115 and 149-235; these read AVSE…PYLH and FGTD…EVVG. Residues 96–112 show a composition bias toward polar residues; that stretch reads KASTQGSGQTNSQNTSP. Low complexity-rich tracts occupy residues 155–179 and 211–222; these read TQPQPQPLKTTTPVFGTNSGNLGSV and STSDGNTSSTNN.

The protein belongs to the adhesin P1 family.

This Mycoplasma pneumoniae (strain ATCC 29342 / M129 / Subtype 1) (Mycoplasmoides pneumoniae) protein is Putative adhesin P1-like protein MPN_132.